Reading from the N-terminus, the 325-residue chain is tRNA dimethylallyltransferase (325 aa).

An ATP-binding site is contributed by 11–18; sequence GPTASGKS. Position 13 to 18 (13 to 18) interacts with substrate; sequence TASGKS. Interaction with substrate tRNA stretches follow at residues 36 to 39 and 160 to 164; these read DSMQ and QRLIR.

Belongs to the IPP transferase family. Monomer. Mg(2+) serves as cofactor.

It catalyses the reaction adenosine(37) in tRNA + dimethylallyl diphosphate = N(6)-dimethylallyladenosine(37) in tRNA + diphosphate. Its function is as follows. Catalyzes the transfer of a dimethylallyl group onto the adenine at position 37 in tRNAs that read codons beginning with uridine, leading to the formation of N6-(dimethylallyl)adenosine (i(6)A). The sequence is that of tRNA dimethylallyltransferase from Rickettsia canadensis (strain McKiel).